The primary structure comprises 105 residues: MAKLRKGDNVIVIAGKDKGKQGTVLAVKNDRIKVEGINIVTKHQKPNAATGAEGGIVKQEAFLHISNVAIFNAQTQKADRITYQFDDEGNKKRVYRSNGEVVATA.

This sequence belongs to the universal ribosomal protein uL24 family. Part of the 50S ribosomal subunit.

Functionally, one of two assembly initiator proteins, it binds directly to the 5'-end of the 23S rRNA, where it nucleates assembly of the 50S subunit. In terms of biological role, one of the proteins that surrounds the polypeptide exit tunnel on the outside of the subunit. This Psychrobacter sp. (strain PRwf-1) protein is Large ribosomal subunit protein uL24.